Here is a 317-residue protein sequence, read N- to C-terminus: Lipoyl synthase (317 aa).

The [4Fe-4S] cluster site is built by Cys-56, Cys-61, Cys-67, Cys-82, Cys-86, Cys-89, and Ser-298. The 220-residue stretch at 68–287 (WEDREATFLI…KEEAEQIGFS (220 aa)) folds into the Radical SAM core domain.

The protein belongs to the radical SAM superfamily. Lipoyl synthase family. [4Fe-4S] cluster is required as a cofactor.

The protein resides in the cytoplasm. It catalyses the reaction [[Fe-S] cluster scaffold protein carrying a second [4Fe-4S](2+) cluster] + N(6)-octanoyl-L-lysyl-[protein] + 2 oxidized [2Fe-2S]-[ferredoxin] + 2 S-adenosyl-L-methionine + 4 H(+) = [[Fe-S] cluster scaffold protein] + N(6)-[(R)-dihydrolipoyl]-L-lysyl-[protein] + 4 Fe(3+) + 2 hydrogen sulfide + 2 5'-deoxyadenosine + 2 L-methionine + 2 reduced [2Fe-2S]-[ferredoxin]. It functions in the pathway protein modification; protein lipoylation via endogenous pathway; protein N(6)-(lipoyl)lysine from octanoyl-[acyl-carrier-protein]: step 2/2. Catalyzes the radical-mediated insertion of two sulfur atoms into the C-6 and C-8 positions of the octanoyl moiety bound to the lipoyl domains of lipoate-dependent enzymes, thereby converting the octanoylated domains into lipoylated derivatives. The polypeptide is Lipoyl synthase (Streptomyces coelicolor (strain ATCC BAA-471 / A3(2) / M145)).